The primary structure comprises 628 residues: Chaperone protein HtpG (628 aa).

Residues 1–340 form an a; substrate-binding region; sequence MSTETLQKET…SADLPLNVSR (340 aa). The segment at 341-557 is b; sequence EILQHSKDIE…EHDLSGNLER (217 aa). The interval 558–628 is c; the sequence is LLKAAGQKTP…FVRRVNAMLA (71 aa).

It belongs to the heat shock protein 90 family. Homodimer.

It localises to the cytoplasm. Molecular chaperone. Has ATPase activity. In Methylobacillus flagellatus (strain ATCC 51484 / DSM 6875 / VKM B-1610 / KT), this protein is Chaperone protein HtpG.